We begin with the raw amino-acid sequence, 929 residues long: Dual serine/threonine and tyrosine protein kinase (929 aa).

The segment covering 1–14 (MEGDGVPWGSEPVS) has biased composition (low complexity). Residues 1 to 21 (MEGDGVPWGSEPVSGPGPGGG) are disordered. Coiled coils occupy residues 189-215 (EEDL…MHHA) and 395-431 (RKKE…KEEL). The 255-residue stretch at 652–906 (PKLGQELGRG…PLLGIVQPML (255 aa)) folds into the Protein kinase domain. Residues 658-666 (LGRGQYGVV) and Lys-681 each bind ATP. The active-site Proton acceptor is the Asp-777.

The protein belongs to the protein kinase superfamily. Ser/Thr protein kinase family. As to expression, predominantly expressed in skeletal muscle and testis. Expressed in basolateral and apical membranes of all tubular epithelia. Expressed in thin ascending limb of the loop of Henle and the distal convoluted tubule. Expressed in all layers of transitional ureteric epithelium and in the ureteric smooth-muscle cells. Weakly expressed in heart, brain, placenta, kidney, pancreas, spleen, thymus, prostate, uterus, small intestine, white blood cells, stomach, spinal cord and adrenal gland. Is widely distributed in the CNS. Also detected in several tumor cell lines. Expressed in the skin.

The protein localises to the cytoplasm. It is found in the cell membrane. It localises to the apical cell membrane. Its subcellular location is the basolateral cell membrane. The protein resides in the cell junction. The enzyme catalyses L-seryl-[protein] + ATP = O-phospho-L-seryl-[protein] + ADP + H(+). The catalysed reaction is L-threonyl-[protein] + ATP = O-phospho-L-threonyl-[protein] + ADP + H(+). It carries out the reaction L-tyrosyl-[protein] + ATP = O-phospho-L-tyrosyl-[protein] + ADP + H(+). In terms of biological role, acts as a positive regulator of ERK phosphorylation downstream of fibroblast growth factor-receptor activation. Involved in the regulation of both caspase-dependent apoptosis and caspase-independent cell death. In the skin, it plays a predominant role in suppressing caspase-dependent apoptosis in response to UV stress in a range of dermal cell types. In Homo sapiens (Human), this protein is Dual serine/threonine and tyrosine protein kinase (DSTYK).